A 699-amino-acid chain; its full sequence is tRNA 5-methylaminomethyl-2-thiouridine biosynthesis bifunctional protein MnmC (699 aa).

Residues 1 to 260 form a tRNA (mnm(5)s(2)U34)-methyltransferase region; it reads MTAKPQKSCQ…ERKLLRQQAD (260 aa). The FAD-dependent cmnm(5)s(2)U34 oxidoreductase stretch occupies residues 282-699; sequence VGGGLASANL…LRKLLKGKAL (418 aa).

It in the N-terminal section; belongs to the methyltransferase superfamily. tRNA (mnm(5)s(2)U34)-methyltransferase family. The protein in the C-terminal section; belongs to the DAO family. The cofactor is FAD.

The protein localises to the cytoplasm. The enzyme catalyses 5-aminomethyl-2-thiouridine(34) in tRNA + S-adenosyl-L-methionine = 5-methylaminomethyl-2-thiouridine(34) in tRNA + S-adenosyl-L-homocysteine + H(+). Catalyzes the last two steps in the biosynthesis of 5-methylaminomethyl-2-thiouridine (mnm(5)s(2)U) at the wobble position (U34) in tRNA. Catalyzes the FAD-dependent demodification of cmnm(5)s(2)U34 to nm(5)s(2)U34, followed by the transfer of a methyl group from S-adenosyl-L-methionine to nm(5)s(2)U34, to form mnm(5)s(2)U34. The protein is tRNA 5-methylaminomethyl-2-thiouridine biosynthesis bifunctional protein MnmC of Shewanella sp. (strain MR-4).